A 458-amino-acid polypeptide reads, in one-letter code: Glycine--tRNA ligase (458 aa).

2 residues coordinate substrate: Arg97 and Glu171. Residues 203–205 (RNE), 213–218 (FRTREF), 287–288 (EL), and 331–334 (GADR) each bind ATP. 218-222 (FEQME) contacts substrate. 327 to 331 (EPSLG) lines the substrate pocket.

The protein belongs to the class-II aminoacyl-tRNA synthetase family. Homodimer.

Its subcellular location is the cytoplasm. It carries out the reaction tRNA(Gly) + glycine + ATP = glycyl-tRNA(Gly) + AMP + diphosphate. Its function is as follows. Catalyzes the attachment of glycine to tRNA(Gly). The chain is Glycine--tRNA ligase from Bacillus anthracis.